Consider the following 1034-residue polypeptide: Probable isoleucine--tRNA ligase, mitochondrial (1034 aa).

A mitochondrion-targeting transit peptide spans 1–32 (MISLNNSFFNKRVIVNSFNNYKRSFGTKSQNE). Positions 94 to 104 (PYANGDLHMGH) match the 'HIGH' region motif. Residues 655 to 659 (KMSKS) carry the 'KMSKS' region motif. Position 658 (Lys-658) interacts with ATP.

This sequence belongs to the class-I aminoacyl-tRNA synthetase family.

Its subcellular location is the mitochondrion matrix. It catalyses the reaction tRNA(Ile) + L-isoleucine + ATP = L-isoleucyl-tRNA(Ile) + AMP + diphosphate. This is Probable isoleucine--tRNA ligase, mitochondrial (mileS) from Dictyostelium discoideum (Social amoeba).